We begin with the raw amino-acid sequence, 395 residues long: Guanine nucleotide-binding protein subunit beta-5b (395 aa).

WD repeat units follow at residues 103-142 (GHGN…KEHA), 145-184 (MPCT…NENL), 193-234 (MHTN…QSFH), 235-276 (GHSA…NVQS), 279-318 (THDS…EVAI), 320-362 (SKDS…RVAI), and 365-395 (GHEN…RIWA).

It belongs to the WD repeat G protein beta family. As to quaternary structure, may interact with RGS9; this interaction stabilizes both proteins and increases RGS9 GTPase-activating protein (GAP) activity, hence accelerating the deactivation of D(2) dopamine receptor-mediated signaling.

The protein resides in the membrane. Enhances GTPase-activating protein (GAP) activity of regulator of G protein signaling (RGS) proteins, such as RGS7 and RGS9, hence involved in the termination of the signaling initiated by the G protein coupled receptors (GPCRs) by accelerating the GTP hydrolysis on the G-alpha subunits, thereby promoting their inactivation. Increases RGS7 GTPase-activating protein (GAP) activity, thereby regulating mood and cognition. Increases RGS9 GTPase-activating protein (GAP) activity, hence contributes to the deactivation of G protein signaling initiated by D(2) dopamine receptors. Along with gnb5a, plays an important role in neuronal signaling, including in the parasympathetic, but not sympathetic, control of heart rate. This chain is Guanine nucleotide-binding protein subunit beta-5b, found in Danio rerio (Zebrafish).